The following is a 271-amino-acid chain: 3-methyl-2-oxobutanoate hydroxymethyltransferase (271 aa).

Aspartate 53 and aspartate 92 together coordinate Mg(2+). 3-methyl-2-oxobutanoate is bound by residues 53-54, aspartate 92, and lysine 120; that span reads DS. Mg(2+) is bound at residue glutamate 122. Glutamate 189 serves as the catalytic Proton acceptor.

Belongs to the PanB family. In terms of assembly, homodecamer; pentamer of dimers. The cofactor is Mg(2+).

The protein resides in the cytoplasm. The catalysed reaction is 3-methyl-2-oxobutanoate + (6R)-5,10-methylene-5,6,7,8-tetrahydrofolate + H2O = 2-dehydropantoate + (6S)-5,6,7,8-tetrahydrofolate. It participates in cofactor biosynthesis; (R)-pantothenate biosynthesis; (R)-pantoate from 3-methyl-2-oxobutanoate: step 1/2. In terms of biological role, catalyzes the reversible reaction in which hydroxymethyl group from 5,10-methylenetetrahydrofolate is transferred onto alpha-ketoisovalerate to form ketopantoate. This Burkholderia mallei (strain NCTC 10247) protein is 3-methyl-2-oxobutanoate hydroxymethyltransferase.